The chain runs to 27 residues: C-reactive protein P1 (27 aa).

The tract at residues isoleucine 1 to lysine 27 is disordered. A Pentraxin (PTX) domain is found at serine 6–lysine 27.

This sequence belongs to the pentraxin family. Homopentamer. Pentraxin (or pentaxin) have a discoid arrangement of 5 non-covalently bound subunits. Exists as a dimer under reducing conditions. Ca(2+) serves as cofactor. Glycosylated.

Its subcellular location is the secreted. In terms of biological role, displays several functions associated with host defense: it promotes agglutination, bacterial capsular swelling, phagocytosis, and complement fixation through its calcium-dependent binding to phosphorylcholine. This chain is C-reactive protein P1, found in Gadus morhua (Atlantic cod).